We begin with the raw amino-acid sequence, 129 residues long: Sulfurtransferase TusD (129 aa).

The active-site Cysteine persulfide intermediate is the cysteine 79.

This sequence belongs to the DsrE/TusD family. As to quaternary structure, heterohexamer, formed by a dimer of trimers. The hexameric TusBCD complex contains 2 copies each of TusB, TusC and TusD. The TusBCD complex interacts with TusE.

It localises to the cytoplasm. Its function is as follows. Part of a sulfur-relay system required for 2-thiolation of 5-methylaminomethyl-2-thiouridine (mnm(5)s(2)U) at tRNA wobble positions. Accepts sulfur from TusA and transfers it in turn to TusE. This Serratia proteamaculans (strain 568) protein is Sulfurtransferase TusD.